The chain runs to 668 residues: Myb-like protein W (668 aa).

Disordered stretches follow at residues 57–124 (LDQF…NESV), 246–357 (EKEK…EEEV), 403–432 (KPKSKLKSSSKPGIPTSPITMKTNPHTDKG), 497–546 (YTNT…NKER), 561–583 (SMGRFSAKPPPIKTTTTTTTTTS), and 631–668 (QCEERKKKEDRDVDEDGEDDYYFGGDNSKNGDDDDEII). Low complexity predominate over residues 69 to 121 (NNNNNNNSNNNNNNNNNNNNNNNNNNNNNNNNNNNNNNNNNNYNNYNNNNNNN). Over residues 246–268 (EKEKRKKEREEREEREKQEKQEQ) the composition is skewed to basic and acidic residues. Over residues 293–307 (NNKDNNHNGYYYYYD) the composition is skewed to low complexity. Residues 308 to 318 (NDNDNYNDGDD) show a composition bias toward acidic residues. The span at 319–335 (EKEKEKEKEKEKEKENE) shows a compositional bias: basic and acidic residues. The Myb-like domain maps to 344–398 (TSMVNSEEWTEEEVNKMNEIRGKLSTADYNYWDKVSAHVKSKTAEQCQRKYNSRF). Residues 501–542 (NNNNNNNNNNNNNNNNNNNNNNNNNNNNNNNNNNNNNNNNNN) are compositionally biased toward low complexity. Basic and acidic residues predominate over residues 632-641 (CEERKKKEDR). Residues 642–651 (DVDEDGEDDY) show a composition bias toward acidic residues.

The polypeptide is Myb-like protein W (mybW) (Dictyostelium discoideum (Social amoeba)).